The following is a 902-amino-acid chain: 4-hydroxyphenylacetate decarboxylase glycyl radical subunit (902 aa).

The 737-residue stretch at 38-774 (KRAEDLLDVY…ATLATPDGRL (737 aa)) folds into the PFL domain. 4-hydroxyphenylacetate-binding residues include Ser348 and Cys507. Cys507 serves as the catalytic Cysteine radical intermediate. The active-site Proton donor is the Glu509. Residues His540 and Glu641 each contribute to the 4-hydroxyphenylacetate site. The Glycine radical domain occupies 782–902 (GSVSAYAGTD…VIARTEYEGV (121 aa)). Gly877 is modified (glycine radical).

It belongs to the glycyl radical enzyme (GRE) family. HPAD subfamily. In terms of assembly, heterooctamer consisting of 4 large (HpdB) subunits and 4 small (HpdC) subunits, arranged as a tetramer of heterodimers. Also forms a catalytically inactive homodimer. Post-translationally, requires the activating protein CsdA to generate the key active site glycyl radical that is involved in catalysis. In terms of processing, phosphorylated on serine. Phosphorylation may trigger the formation of the active heterooctamers and thereby regulates enzyme activity.

The enzyme catalyses 4-hydroxyphenylacetate + H(+) = 4-methylphenol + CO2. It catalyses the reaction 3,4-dihydroxyphenylacetate + H(+) = 4-methylcatechol + CO2. Its function is as follows. Glycyl radical subunit of the HPA decarboxylase that decarboxylates phenylacetates with a hydroxyl group in the p-position. Active toward 4-hydroxyphenylacetate and 3,4-dihydroxyphenylacetate, forming 4-methylphenol and 4-methylcatechol, respectively. Is likely involved in the catabolism of aromatic amino acids such as tyrosine fermentation. 4-methylphenol (p-cresol) formation provides metabolic toxicity, which allows an active suppression of other microbes and may provide growth advantages for the producers in highly competitive environments. The large subunit is the catalytic subunit that binds the substrate. This Clostridioides difficile (strain CD196) (Peptoclostridium difficile) protein is 4-hydroxyphenylacetate decarboxylase glycyl radical subunit.